Reading from the N-terminus, the 528-residue chain is DNA primase large subunit (528 aa).

The segment at 210 to 239 is H-T-H-like motif; it reads NEEHQRKQYFQQEKFIKLPFENVIELVGNR. Positions 336, 417, 434, and 474 each coordinate [4Fe-4S] cluster.

The protein belongs to the eukaryotic-type primase large subunit family. DNA polymerase alpha:primase is a four subunit enzyme complex, which is assembled throughout the cell cycle, and consists of the two DNA polymerase subunits A POL1 and B POL12, and the DNA primase large PRI2 and small PRI1 subunits. Interacts with MCM10. The cofactor is [4Fe-4S] cluster.

Functionally, DNA primase is the polymerase that synthesizes small RNA primers for the Okazaki fragments made during discontinuous DNA replication. In a complex with DNA polymerase alpha (DNA polymerase alpha:primase) constitutes a replicative polymerase. Both primase components participate in formation of the active center, but the ATP-binding site is exclusively located on p48. The chain is DNA primase large subunit (PRI2) from Saccharomyces cerevisiae (strain ATCC 204508 / S288c) (Baker's yeast).